We begin with the raw amino-acid sequence, 248 residues long: Probable transcriptional regulatory protein AZC_0510 (248 aa).

This sequence belongs to the TACO1 family.

It is found in the cytoplasm. This Azorhizobium caulinodans (strain ATCC 43989 / DSM 5975 / JCM 20966 / LMG 6465 / NBRC 14845 / NCIMB 13405 / ORS 571) protein is Probable transcriptional regulatory protein AZC_0510.